A 204-amino-acid polypeptide reads, in one-letter code: Methylthioribulose-1-phosphate dehydratase (204 aa).

Zn(2+) is bound by residues His-94 and His-96.

Belongs to the aldolase class II family. MtnB subfamily. Zn(2+) serves as cofactor.

The enzyme catalyses 5-(methylsulfanyl)-D-ribulose 1-phosphate = 5-methylsulfanyl-2,3-dioxopentyl phosphate + H2O. Its pathway is amino-acid biosynthesis; L-methionine biosynthesis via salvage pathway; L-methionine from S-methyl-5-thio-alpha-D-ribose 1-phosphate: step 2/6. Its function is as follows. Catalyzes the dehydration of methylthioribulose-1-phosphate (MTRu-1-P) into 2,3-diketo-5-methylthiopentyl-1-phosphate (DK-MTP-1-P). This chain is Methylthioribulose-1-phosphate dehydratase, found in Citrobacter koseri (strain ATCC BAA-895 / CDC 4225-83 / SGSC4696).